The following is a 119-amino-acid chain: Chorion class CA protein ERA.3 (119 aa).

The N-terminal stretch at 1–21 (MSYFVVFAICIQACLFHNVYS) is a signal peptide. A left arm region spans residues 22 to 55 (QCLGRVGPGGPPLGPYGGPLGGPGYGPVGYGGCG). Residues 56 to 103 (GYGGSGIGNVAVAGELPVVGSSAVMGQVPVIGAVEFAGPACAVGSVSI) form a central domain region. Residues 104-119 (SGACGPTCGCGGLPYY) are right arm.

It belongs to the chorion protein family.

Functionally, this protein is one of many from the eggshell of the silk moth. In Bombyx mori (Silk moth), this protein is Chorion class CA protein ERA.3 (ERA.3).